The primary structure comprises 172 residues: Auxin-responsive protein IAA30 (172 aa).

The span at 1–18 shows a compositional bias: low complexity; sequence MGRGRSSSSSSIESSCKS. The tract at residues 1–28 is disordered; the sequence is MGRGRSSSSSSIESSCKSNPFGVSSSNT. Residues 35-39 carry the EAR-like (transcriptional repression) motif; that stretch reads LRLGL. The PB1 domain maps to 82–171; it reads SFYVKVNMEG…RRLKISRAYH (90 aa).

This sequence belongs to the Aux/IAA family. As to quaternary structure, homodimers and heterodimers.

It is found in the nucleus. Its function is as follows. Aux/IAA proteins are short-lived transcriptional factors that function as repressors of early auxin response genes at low auxin concentrations. Repression is thought to result from the interaction with auxin response factors (ARFs), proteins that bind to the auxin-responsive promoter element (AuxRE). Formation of heterodimers with ARF proteins may alter their ability to modulate early auxin response genes expression. This Arabidopsis thaliana (Mouse-ear cress) protein is Auxin-responsive protein IAA30 (IAA30).